We begin with the raw amino-acid sequence, 197 residues long: Putative NADH dehydrogenase/NAD(P)H nitroreductase Lcho_1290 (197 aa).

This sequence belongs to the nitroreductase family. HadB/RutE subfamily. FMN serves as cofactor.

The sequence is that of Putative NADH dehydrogenase/NAD(P)H nitroreductase Lcho_1290 from Leptothrix cholodnii (strain ATCC 51168 / LMG 8142 / SP-6) (Leptothrix discophora (strain SP-6)).